A 344-amino-acid chain; its full sequence is AA9 family lytic polysaccharide monooxygenase J (344 aa).

The N-terminal stretch at 1–20 is a signal peptide; sequence MKSSLLVVLTAGLAVRDAIA. Positions 21 and 99 each coordinate Cu(2+). Cys58 and Cys194 are joined by a disulfide. Residues His180 and Gln189 each coordinate O2. Tyr191 contacts Cu(2+). The segment at 272–301 is disordered; that stretch reads PGGKPASGGSDGNAPEVAEPSGGEGSPSAP. The segment covering 285-301 has biased composition (low complexity); the sequence is APEVAEPSGGEGSPSAP. The CBM1 domain maps to 304 to 341; it reads CEVAAYGQCGGDQYSGCTQCASGYTCKAVSPPYYSQCA.

This sequence belongs to the polysaccharide monooxygenase AA9 family. Requires Cu(2+) as cofactor.

Its subcellular location is the secreted. The enzyme catalyses [(1-&gt;4)-beta-D-glucosyl]n+m + reduced acceptor + O2 = 4-dehydro-beta-D-glucosyl-[(1-&gt;4)-beta-D-glucosyl]n-1 + [(1-&gt;4)-beta-D-glucosyl]m + acceptor + H2O.. Functionally, lytic polysaccharide monooxygenase (LPMO) that depolymerizes crystalline and amorphous polysaccharides via the oxidation of scissile alpha- or beta-(1-4)-glycosidic bonds, yielding C4 oxidation products. Catalysis by LPMOs requires the reduction of the active-site copper from Cu(II) to Cu(I) by a reducing agent and H(2)O(2) or O(2) as a cosubstrate. This is AA9 family lytic polysaccharide monooxygenase J (gh61-10) from Neurospora crassa (strain ATCC 24698 / 74-OR23-1A / CBS 708.71 / DSM 1257 / FGSC 987).